The chain runs to 134 residues: Ribonuclease P protein component (134 aa).

It belongs to the RnpA family. As to quaternary structure, consists of a catalytic RNA component (M1 or rnpB) and a protein subunit.

The catalysed reaction is Endonucleolytic cleavage of RNA, removing 5'-extranucleotides from tRNA precursor.. Functionally, RNaseP catalyzes the removal of the 5'-leader sequence from pre-tRNA to produce the mature 5'-terminus. It can also cleave other RNA substrates such as 4.5S RNA. The protein component plays an auxiliary but essential role in vivo by binding to the 5'-leader sequence and broadening the substrate specificity of the ribozyme. The sequence is that of Ribonuclease P protein component from Pseudomonas putida (strain ATCC 700007 / DSM 6899 / JCM 31910 / BCRC 17059 / LMG 24140 / F1).